We begin with the raw amino-acid sequence, 479 residues long: U6 small nuclear RNA (adenine-(43)-N(6))-methyltransferase (479 aa).

Lys82, Gly108, Asp131, Thr164, and Asn184 together coordinate S-adenosyl-L-methionine. Residues 420–424 are involved in dlc-1 binding; the sequence is DNASQ.

Belongs to the methyltransferase superfamily. METTL16/RlmF family. In terms of assembly, self-associates. Interacts with dlc-1; the interaction is direct, and is required for nuclear localization of mett-10. In terms of tissue distribution, expressed in the intestine, vulva, and cells of the somatic gonad including distal tip cells, gonadal sheath cells and spermatheca.

The protein localises to the nucleus. It catalyses the reaction an adenosine in mRNA + S-adenosyl-L-methionine = an N(6)-methyladenosine in mRNA + S-adenosyl-L-homocysteine + H(+). The enzyme catalyses adenosine in U6 snRNA + S-adenosyl-L-methionine = N(6)-methyladenosine in U6 snRNA + S-adenosyl-L-homocysteine + H(+). Functionally, RNA N6-methyltransferase that methylates adenosine residues at the N(6) position of a subset of RNAs and is involved in S-adenosyl-L-methionine homeostasis by regulating splicing of S-adenosylmethionine synthase transcripts (sams-3, sams-4 and sams-5). Able to N6-methylate a subset of mRNAs containing the 5'UACAGAAAC-3' nonamer sequence. Plays a key role in S-adenosyl-L-methionine homeostasis: under rich-diet conditions, catalyzes N6-methylation of S-adenosylmethionine synthase mRNAs (sams-3, sams-4 and sams-5), directly inhibiting splicing and protein production of S-adenosylmethionine synthase. In addition to mRNAs, also able to mediate N6-methylation of U6 small nuclear RNA (U6 snRNA). Required for gamete production, inhibiting germ cell proliferative fate and ensuring germ cell meiotic development. Also promotes progression of the mitotic cell cycle in those germ cells that continue to proliferate. Plays a role in the development of the vulva, somatic gonad and embryo. This Caenorhabditis elegans protein is U6 small nuclear RNA (adenine-(43)-N(6))-methyltransferase.